A 470-amino-acid polypeptide reads, in one-letter code: Transcriptional activator PmfR (470 aa).

As to quaternary structure, forms oligomers in solution, probably homotetramers.

It participates in alkaloid degradation; nicotine degradation [regulation]. Functionally, transcriptional regulator involved in the activation of the purU-mabO-folD-nepA-nepB and mao-ORF55-nbr operons implicated in the nicotine catabolic pathway. The sequence GTTT-14 bp-AAAC seems to be the core binding site of the regulator upstream of the -35 promoter region of the operon. The sequence is that of Transcriptional activator PmfR (pmfR) from Paenarthrobacter nicotinovorans (Arthrobacter nicotinovorans).